Here is a 427-residue protein sequence, read N- to C-terminus: Citrate synthase (427 aa).

Lys283 is subject to N6-acetyllysine. Catalysis depends on residues His306 and Asp363.

It belongs to the citrate synthase family. Homohexamer.

It carries out the reaction oxaloacetate + acetyl-CoA + H2O = citrate + CoA + H(+). The protein operates within carbohydrate metabolism; tricarboxylic acid cycle; isocitrate from oxaloacetate: step 1/2. This chain is Citrate synthase (gltA), found in Escherichia coli O6:H1 (strain CFT073 / ATCC 700928 / UPEC).